A 680-amino-acid chain; its full sequence is DNA-directed RNA polymerase subunit beta' (680 aa).

Zn(2+) contacts are provided by cysteine 69, cysteine 71, cysteine 87, and cysteine 90. Mg(2+) contacts are provided by aspartate 489, aspartate 491, and aspartate 493.

The protein belongs to the RNA polymerase beta' chain family. RpoC1 subfamily. In plastids the minimal PEP RNA polymerase catalytic core is composed of four subunits: alpha, beta, beta', and beta''. When a (nuclear-encoded) sigma factor is associated with the core the holoenzyme is formed, which can initiate transcription. Requires Mg(2+) as cofactor. It depends on Zn(2+) as a cofactor.

The protein resides in the plastid. It localises to the chloroplast. The enzyme catalyses RNA(n) + a ribonucleoside 5'-triphosphate = RNA(n+1) + diphosphate. DNA-dependent RNA polymerase catalyzes the transcription of DNA into RNA using the four ribonucleoside triphosphates as substrates. The protein is DNA-directed RNA polymerase subunit beta' of Aethionema cordifolium (Lebanon stonecress).